The sequence spans 670 residues: Methionine--tRNA ligase (670 aa).

Positions 14 to 24 (PYANGHLHLGH) match the 'HIGH' region motif. The Zn(2+) site is built by Cys-145, Cys-148, Cys-158, and Cys-161. The 'KMSKS' region signature appears at 330 to 334 (KMSKS). Position 333 (Lys-333) interacts with ATP. Positions 570–670 (DFAKVDLRIA…AGAFPGMKVK (101 aa)) constitute a tRNA-binding domain.

This sequence belongs to the class-I aminoacyl-tRNA synthetase family. MetG type 1 subfamily. Homodimer. It depends on Zn(2+) as a cofactor.

The protein resides in the cytoplasm. The catalysed reaction is tRNA(Met) + L-methionine + ATP = L-methionyl-tRNA(Met) + AMP + diphosphate. Functionally, is required not only for elongation of protein synthesis but also for the initiation of all mRNA translation through initiator tRNA(fMet) aminoacylation. This is Methionine--tRNA ligase from Legionella pneumophila (strain Corby).